The following is a 292-amino-acid chain: MNKDIATPIRTKEILNKYGFSFKKSLGQNFLIDTNILDRIVDHAGVTERTGVIEIGPGIGALTEQLAKRAKKVTAFEIDQRLLPILEDTLSPYDNVTVIHQDVLKADVRAVMDEQFQDCDEVMVVANLPYYVTTPIIMKLLEENLPLKGIVVMLQKEVADRMAAKPSSKEYGSLSIAVQFYTEAKTVMNVPKTVFVPQPNVDSAVIRLTLRKEPAVAVQDAAFFFQVVKASFAQRRKTLFNNLVNNLPNGKENKSKIERALQDSHIDGKRRGESLSIEEFAVLSDRLREVLL.

S-adenosyl-L-methionine is bound by residues Asn-29, Leu-31, Gly-56, Glu-77, Asp-102, and Asn-127.

Belongs to the class I-like SAM-binding methyltransferase superfamily. rRNA adenine N(6)-methyltransferase family. RsmA subfamily.

It localises to the cytoplasm. The enzyme catalyses adenosine(1518)/adenosine(1519) in 16S rRNA + 4 S-adenosyl-L-methionine = N(6)-dimethyladenosine(1518)/N(6)-dimethyladenosine(1519) in 16S rRNA + 4 S-adenosyl-L-homocysteine + 4 H(+). Functionally, specifically dimethylates two adjacent adenosines (A1518 and A1519) in the loop of a conserved hairpin near the 3'-end of 16S rRNA in the 30S particle. May play a critical role in biogenesis of 30S subunits. The chain is Ribosomal RNA small subunit methyltransferase A from Bacillus licheniformis (strain ATCC 14580 / DSM 13 / JCM 2505 / CCUG 7422 / NBRC 12200 / NCIMB 9375 / NCTC 10341 / NRRL NRS-1264 / Gibson 46).